Consider the following 417-residue polypeptide: Fructose-1,6-bisphosphatase 1, chloroplastic (417 aa).

A chloroplast-targeting transit peptide spans 1–59 (MAATAATTTSSHLLLSSSRHVASSSQPSILSPRSLFSNNGKRAPTGVRNHQYASGVRCM). The segment covering 24–35 (SSQPSILSPRSL) has biased composition (low complexity). The tract at residues 24 to 48 (SSQPSILSPRSLFSNNGKRAPTGVR) is disordered. An N-acetylalanine modification is found at Ala60. 5 residues coordinate Mg(2+): Glu138, Glu167, Asp188, Leu190, and Asp191. Substrate is bound at residue 191–194 (DGSS). Cys233 and Cys238 are oxidised to a cystine. Positions 297, 329, 347, 349, and 359 each coordinate substrate. Glu365 serves as a coordination point for Mg(2+).

Belongs to the FBPase class 1 family. In terms of assembly, homotetramer. Requires Mg(2+) as cofactor.

It localises to the plastid. Its subcellular location is the chloroplast stroma. It catalyses the reaction beta-D-fructose 1,6-bisphosphate + H2O = beta-D-fructose 6-phosphate + phosphate. Its pathway is carbohydrate biosynthesis; Calvin cycle. Catalyzes the irreversible reaction from fructose-1,6-bisphosphate to fructose-6-phosphate and inorganic phosphate, to regenerate the primary CO(2) acceptor molecule, ribulose-1,5-bisphosphate. Involved in the regulation of photosynthetic electron flow and sucrose synthesis. Its activity is critical for normal plant development and important for the regulation of a wide range of metabolic processes. The chain is Fructose-1,6-bisphosphatase 1, chloroplastic from Arabidopsis thaliana (Mouse-ear cress).